A 160-amino-acid polypeptide reads, in one-letter code: Large ribosomal subunit protein uL16 (160 aa).

Belongs to the universal ribosomal protein uL16 family. As to quaternary structure, part of the 50S ribosomal subunit.

Binds 23S rRNA and is also seen to make contacts with the A and possibly P site tRNAs. In Prochlorococcus marinus (strain MIT 9515), this protein is Large ribosomal subunit protein uL16.